The primary structure comprises 156 residues: Histone H2B.2 (156 aa).

Basic and acidic residues-rich tracts occupy residues 1 to 10 (MAPKKDEKPA) and 24 to 58 (AKAEAKPKAEKAAKKAKKEPAKKAAKEPKGDGEKK). Positions 1–63 (MAPKKDEKPA…DGEKKDKKKK (63 aa)) are disordered. 2 positions are modified to N6-acetyllysine: Lys40 and Lys41. Residue Lys152 forms a Glycyl lysine isopeptide (Lys-Gly) (interchain with G-Cter in ubiquitin) linkage.

Belongs to the histone H2B family. As to quaternary structure, the nucleosome is a histone octamer containing two molecules each of H2A, H2B, H3 and H4 assembled in one H3-H4 heterotetramer and two H2A-H2B heterodimers. The octamer wraps approximately 147 bp of DNA. Post-translationally, the N-terminus is blocked. In terms of processing, can be acetylated to form H2BK33ac and H2BK34ac. Acetylated mainly on the ubiquitinated form. Monoubiquitinated to form H2BK143ub1; which is increased during the light period and may give a specific tag for epigenetic transcriptional activation.

Its subcellular location is the nucleus. It is found in the chromosome. In terms of biological role, core component of nucleosome. Nucleosomes wrap and compact DNA into chromatin, limiting DNA accessibility to the cellular machineries which require DNA as a template. Histones thereby play a central role in transcription regulation, DNA repair, DNA replication and chromosomal stability. DNA accessibility is regulated via a complex set of post-translational modifications of histones, also called histone code, and nucleosome remodeling. In Chlamydomonas reinhardtii (Chlamydomonas smithii), this protein is Histone H2B.2.